The chain runs to 245 residues: Tegument protein UL51 homolog (245 aa).

The S-palmitoyl cysteine; by host moiety is linked to residue cysteine 10. The tract at residues 225 to 245 is disordered; it reads PVKSNLKSKHKPKRKASLVAV. Basic residues predominate over residues 230–245; it reads LKSKHKPKRKASLVAV.

Belongs to the herpesviridae UL51 family. As to quaternary structure, oligomerizes. Interacts with ORF55; this interaction mediates ORF55 incorporation to virions. In terms of processing, phosphorylated. Palmitoylation is necessary for Golgi localization.

It localises to the virion tegument. The protein localises to the host cytoplasm. Its subcellular location is the host Golgi apparatus. In terms of biological role, plays several roles during the time course of infection, including egress of virus particles from the perinuclear space and secondary envelopment of cytoplasmic capsids that bud into specific trans-Golgi network (TGN)-derived membranes. In Equine herpesvirus 1 (strain Ab4p) (EHV-1), this protein is Tegument protein UL51 homolog.